The primary structure comprises 456 residues: MVNFASEVDKNNAFDSAHPSRKCKGSLDCNDPDPIFRHKVLVIIHKLAISSWNRIPLTLCNKLHIKRISGALTNAVYYVAPPEGYHAPKLLLRIYGPHVELFINRQVELENLKRLARHNIGPYLIGEFSNGRFEQYMESTTLTCKTIRDPKLSIYVGRRLCELHNFILLHPHEVLEMPAAWKNCLVWLPKAKAKILGRKHSLAITSEFMKTLEEDFNAYYNWFVEWSRDKKDWFGLKMVFSHNDTQYGNLLKIKAKKRSIPLSQKHRTLVPVDFEYAGPNLCAFDLANYFAEWMADYHHPTHNYLMDRSRYPDFNARKLVYHAYVEQSAVINDLLEIEDASLLKTDISDELKNTFEKQIMNLEESVRAISPAANIGWALWGILQCLEEDDEWEDLSVSSQVADRPEKQLVEGSTVPPIGTSSFDYIGYSSEKFDLFYEGCAALGLNGRNRSTFSYA.

It belongs to the choline/ethanolamine kinase family. In terms of assembly, monomer. Requires Mg(2+) as cofactor.

It is found in the cytoplasm. Its subcellular location is the nucleus. It carries out the reaction choline + ATP = phosphocholine + ADP + H(+). It participates in phospholipid metabolism; phosphatidylcholine biosynthesis; phosphocholine from choline: step 1/1. Catalyzes the committed step in the synthesis of phosphatidylcholine by the CDP-choline pathway. The protein is Choline kinase of Schizosaccharomyces pombe (strain 972 / ATCC 24843) (Fission yeast).